Consider the following 292-residue polypeptide: Golgi to ER traffic protein 2 (292 aa).

The span at 1–18 shows a compositional bias: basic and acidic residues; the sequence is MSELSAEEKRKLLRERRQ. A disordered region spans residues 1 to 80; sequence MSELSAEEKR…TPLHDDPEVP (80 aa). At 1 to 158 the chain is on the cytoplasmic side; the sequence is MSELSAEEKR…SQYHAYEQKQ (158 aa). Polar residues-rich tracts occupy residues 29-47 and 55-71; these read RLNN…NVTS and ATTT…QSPT. A helical transmembrane segment spans residues 159-179; the sequence is WKARFLVVRWIIHTLNFVYHY. Topologically, residues 180 to 205 are lumenal; sequence IASGYKLSASPYAFVRAQAVDSHVRT. Residues 206-225 traverse the membrane as a helical segment; it reads FFTAFLTVEVAVISAYFLVM. Residues 226-268 lie on the Cytoplasmic side of the membrane; it reads SQPKFKDFSRENLVSRILSMASAVVPAVGRYQPLVTRALVYWN. Residues 269-289 traverse the membrane as a helical segment; the sequence is GASIFVGDLMLMVFYFGITSV. The Lumenal segment spans residues 290–292; it reads LGN.

This sequence belongs to the GET2 family. As to quaternary structure, component of the Golgi to ER traffic (GET) complex, which is composed of GET1, GET2 and GET3. Within the complex, GET1 and GET2 form a heterotetramer which is stabilized by phosphatidylinositol binding and which binds to the GET3 homodimer.

It localises to the endoplasmic reticulum membrane. The protein localises to the golgi apparatus membrane. Functionally, required for the post-translational delivery of tail-anchored (TA) proteins to the endoplasmic reticulum. Together with GET1, acts as a membrane receptor for soluble GET3, which recognizes and selectively binds the transmembrane domain of TA proteins in the cytosol. The GET complex cooperates with the HDEL receptor ERD2 to mediate the ATP-dependent retrieval of resident ER proteins that contain a C-terminal H-D-E-L retention signal from the Golgi to the ER. This is Golgi to ER traffic protein 2 from Clavispora lusitaniae (strain ATCC 42720) (Yeast).